Here is a 234-residue protein sequence, read N- to C-terminus: MAKLTKRMRVIREKVDATKQYDINEAISLLKELATAKFVESVDVAVNLGIDARKSDQNVRGATVLPHGTGRSVRVAVFTQGANAEAAKAAGAELVGMEDLAEQIKKGEMNFDVVIASPDAMRVVGQLGQVLGPRGLMPNPKVGTVTPNVAEAVKNAKAGQVRYRNDKNGIIHTTIGKVDFDADKLKENLEALLVALKKAKPSQAKGVYIKKVSISTTMGAGVAVDQAGLSASAN.

Belongs to the universal ribosomal protein uL1 family. As to quaternary structure, part of the 50S ribosomal subunit.

In terms of biological role, binds directly to 23S rRNA. The L1 stalk is quite mobile in the ribosome, and is involved in E site tRNA release. Protein L1 is also a translational repressor protein, it controls the translation of the L11 operon by binding to its mRNA. This Salmonella arizonae (strain ATCC BAA-731 / CDC346-86 / RSK2980) protein is Large ribosomal subunit protein uL1.